A 417-amino-acid polypeptide reads, in one-letter code: Glutamyl-tRNA reductase (417 aa).

Substrate contacts are provided by residues 49–52 (TCNR), Ser109, 114–116 (ESQ), and Gln120. The active-site Nucleophile is the Cys50. 189-194 (GLGEIG) is an NADP(+) binding site.

It belongs to the glutamyl-tRNA reductase family. In terms of assembly, homodimer.

The catalysed reaction is (S)-4-amino-5-oxopentanoate + tRNA(Glu) + NADP(+) = L-glutamyl-tRNA(Glu) + NADPH + H(+). The protein operates within porphyrin-containing compound metabolism; protoporphyrin-IX biosynthesis; 5-aminolevulinate from L-glutamyl-tRNA(Glu): step 1/2. Functionally, catalyzes the NADPH-dependent reduction of glutamyl-tRNA(Glu) to glutamate 1-semialdehyde (GSA). In Streptococcus sanguinis (strain SK36), this protein is Glutamyl-tRNA reductase.